The primary structure comprises 125 residues: Mitochondrial import inner membrane translocase subunit tim16-A (125 aa).

The segment at 58-110 is J-like; sequence EAQQILNVSKLTPEEIQKNYEHLFKVNDKGLGGSFYLQSKVVRAKERLDQEME.

It belongs to the TIM16/PAM16 family. Probable component of the PAM complex at least composed of 1 mitochondrial HSP70 protein, 1 GRPE, 1 TIMM44, 1 TIMM16/PAM16 and 1 TIMM14. Associates with the TIM23 complex.

The protein localises to the mitochondrion inner membrane. Functionally, regulates ATP-dependent protein translocation into the mitochondrial matrix. The polypeptide is Mitochondrial import inner membrane translocase subunit tim16-A (pam16-a) (Xenopus laevis (African clawed frog)).